Reading from the N-terminus, the 253-residue chain is Triosephosphate isomerase (253 aa).

8–10 (NWK) is a substrate binding site. His-93 serves as the catalytic Electrophile. The active-site Proton acceptor is Glu-165. Substrate contacts are provided by residues Gly-171, Ser-210, and 231-232 (GG).

Belongs to the triosephosphate isomerase family. Homodimer.

The protein localises to the cytoplasm. The catalysed reaction is D-glyceraldehyde 3-phosphate = dihydroxyacetone phosphate. Its pathway is carbohydrate biosynthesis; gluconeogenesis. It functions in the pathway carbohydrate degradation; glycolysis; D-glyceraldehyde 3-phosphate from glycerone phosphate: step 1/1. Its function is as follows. Involved in the gluconeogenesis. Catalyzes stereospecifically the conversion of dihydroxyacetone phosphate (DHAP) to D-glyceraldehyde-3-phosphate (G3P). The polypeptide is Triosephosphate isomerase (Francisella tularensis subsp. mediasiatica (strain FSC147)).